Reading from the N-terminus, the 569-residue chain is Arginine--tRNA ligase (569 aa).

Positions 128 to 138 (ANPTGPLHVGH) match the 'HIGH' region motif.

Belongs to the class-I aminoacyl-tRNA synthetase family. Monomer.

The protein resides in the cytoplasm. The enzyme catalyses tRNA(Arg) + L-arginine + ATP = L-arginyl-tRNA(Arg) + AMP + diphosphate. In Paracidovorax citrulli (strain AAC00-1) (Acidovorax citrulli), this protein is Arginine--tRNA ligase.